Consider the following 444-residue polypeptide: Ribulose bisphosphate carboxylase large chain (444 aa).

Lysine 5 carries the N6,N6,N6-trimethyllysine modification. Residues asparagine 114 and threonine 164 each coordinate substrate. Lysine 166 functions as the Proton acceptor in the catalytic mechanism. Residue lysine 168 participates in substrate binding. Residues lysine 192, aspartate 194, and glutamate 195 each contribute to the Mg(2+) site. The residue at position 192 (lysine 192) is an N6-carboxylysine. The active-site Proton acceptor is histidine 285. Arginine 286, histidine 318, and serine 370 together coordinate substrate.

This sequence belongs to the RuBisCO large chain family. Type I subfamily. Heterohexadecamer of 8 large chains and 8 small chains; disulfide-linked. The disulfide link is formed within the large subunit homodimers. Mg(2+) is required as a cofactor. Post-translationally, the disulfide bond which can form in the large chain dimeric partners within the hexadecamer appears to be associated with oxidative stress and protein turnover.

The protein localises to the plastid. It is found in the chloroplast. The catalysed reaction is 2 (2R)-3-phosphoglycerate + 2 H(+) = D-ribulose 1,5-bisphosphate + CO2 + H2O. It carries out the reaction D-ribulose 1,5-bisphosphate + O2 = 2-phosphoglycolate + (2R)-3-phosphoglycerate + 2 H(+). RuBisCO catalyzes two reactions: the carboxylation of D-ribulose 1,5-bisphosphate, the primary event in carbon dioxide fixation, as well as the oxidative fragmentation of the pentose substrate in the photorespiration process. Both reactions occur simultaneously and in competition at the same active site. The polypeptide is Ribulose bisphosphate carboxylase large chain (Botrychium strictum (Fern)).